Here is a 351-residue protein sequence, read N- to C-terminus: DNA polymerase IV (351 aa).

In terms of domain architecture, UmuC spans 4 to 185 (IIHVDMDCFF…LPLAKIPGVG (182 aa)). 2 residues coordinate Mg(2+): Asp-8 and Asp-103. Residue Glu-104 is part of the active site.

It belongs to the DNA polymerase type-Y family. In terms of assembly, monomer. Mg(2+) is required as a cofactor.

It is found in the cytoplasm. The enzyme catalyses DNA(n) + a 2'-deoxyribonucleoside 5'-triphosphate = DNA(n+1) + diphosphate. Poorly processive, error-prone DNA polymerase involved in untargeted mutagenesis. Copies undamaged DNA at stalled replication forks, which arise in vivo from mismatched or misaligned primer ends. These misaligned primers can be extended by PolIV. Exhibits no 3'-5' exonuclease (proofreading) activity. May be involved in translesional synthesis, in conjunction with the beta clamp from PolIII. The protein is DNA polymerase IV of Escherichia coli O9:H4 (strain HS).